Consider the following 162-residue polypeptide: Phosphopantetheine adenylyltransferase (162 aa).

Serine 11 contacts substrate. Residues 11 to 12 and histidine 19 contribute to the ATP site; that span reads SF. Residues lysine 43, leucine 75, and arginine 89 each contribute to the substrate site. Residues 90 to 92, glutamate 100, and 125 to 131 each bind ATP; these read GLR and FSYISSS.

It belongs to the bacterial CoaD family. As to quaternary structure, homohexamer. Mg(2+) serves as cofactor.

The protein localises to the cytoplasm. The enzyme catalyses (R)-4'-phosphopantetheine + ATP + H(+) = 3'-dephospho-CoA + diphosphate. It participates in cofactor biosynthesis; coenzyme A biosynthesis; CoA from (R)-pantothenate: step 4/5. Reversibly transfers an adenylyl group from ATP to 4'-phosphopantetheine, yielding dephospho-CoA (dPCoA) and pyrophosphate. This is Phosphopantetheine adenylyltransferase from Petrotoga mobilis (strain DSM 10674 / SJ95).